Here is a 498-residue protein sequence, read N- to C-terminus: Hexokinase-3 (498 aa).

A helical membrane pass occupies residues 4–24; the sequence is VAVAFAAVAVVAACSVAAVMV. A Hexokinase domain is found at 35-494; sequence RTVVEILKEL…SSIGSALLVA (460 aa). Residues 90–227 are hexokinase small subdomain; that stretch reads TGREKGTYYA…GLDMHVAALV (138 aa). The ADP site is built by G104 and T105. D-glucose-binding residues include T193, K194, N228, and D229. A hexokinase large subdomain region spans residues 228–483; it reads NDTVGALSLG…QYVVVKAMED (256 aa). T252 provides a ligand contact to ADP. D-glucose contacts are provided by N255, E283, and E314. ADP is bound at residue G448.

Belongs to the hexokinase family. As to expression, expressed in roots, emerging lateral roots, vascular tissues of cotyledons, roots and leaves, root and shoot meristems, anther filaments and funiculi of mature seeds.

It localises to the mitochondrion outer membrane. The catalysed reaction is a D-hexose + ATP = a D-hexose 6-phosphate + ADP + H(+). It catalyses the reaction D-fructose + ATP = D-fructose 6-phosphate + ADP + H(+). It carries out the reaction D-glucose + ATP = D-glucose 6-phosphate + ADP + H(+). It functions in the pathway carbohydrate metabolism; hexose metabolism. Its pathway is carbohydrate degradation; glycolysis; D-glyceraldehyde 3-phosphate and glycerone phosphate from D-glucose: step 1/4. Its function is as follows. Fructose and glucose phosphorylating enzyme. May be involved in the phosphorylation of glucose during the export from mitochondrion to cytosol. Plays a role in plant growth and development, perhaps by mediating cross-talk between glucose and hormone response pathways. Involved in root hair cell development by mediating certain aspects of cross talk between glucose and ethylene response pathways. The chain is Hexokinase-3 from Arabidopsis thaliana (Mouse-ear cress).